The primary structure comprises 198 residues: Transcription factor FapR (198 aa).

In terms of domain architecture, MaoC-like spans 102–169 (NRIARGHHLF…RTIVEVNSYV (68 aa)).

This sequence belongs to the FapR family.

Its function is as follows. Transcriptional factor involved in regulation of membrane lipid biosynthesis by repressing genes involved in fatty acid and phospholipid metabolism. The protein is Transcription factor FapR of Geobacillus sp. (strain WCH70).